A 450-amino-acid polypeptide reads, in one-letter code: UDP-N-acetylmuramoylalanine--D-glutamate ligase (450 aa).

An ATP-binding site is contributed by 115–121 (GTNGKTT).

The protein belongs to the MurCDEF family.

The protein localises to the cytoplasm. The enzyme catalyses UDP-N-acetyl-alpha-D-muramoyl-L-alanine + D-glutamate + ATP = UDP-N-acetyl-alpha-D-muramoyl-L-alanyl-D-glutamate + ADP + phosphate + H(+). Its pathway is cell wall biogenesis; peptidoglycan biosynthesis. Functionally, cell wall formation. Catalyzes the addition of glutamate to the nucleotide precursor UDP-N-acetylmuramoyl-L-alanine (UMA). This chain is UDP-N-acetylmuramoylalanine--D-glutamate ligase, found in Desulfatibacillum aliphaticivorans.